Here is a 398-residue protein sequence, read N- to C-terminus: MALQAASLVSPALSIPKEGKSSVCLKDSSLFGISFSDHLKSEFSSSTLRCKRELNQQIGAIRAQTTATESPAVNKATPDGKKTLRKGSVVITGASSGLGLATAKALAETGKWHVIMACRDFLKAERAAKSAGITKENYTVMHLDLASLDSVRQFVDNFRQSGRPLDVLVCNAAVYLPTAKEPTFTAEGFELSVGTNHLGHFLLSRLLLEDLNKSSYPSKRLIIVGSITGNTNTLAGNVPPKANLGDLRGLAGGLNGLKSSMIDGGEFDGAKAYKDSKVCNMLTMQEFHKRYHEETGITFASLYPGCIATTGLFREHIPLFRILFPPFQKFITQGYVSEDEAGKRLAQVVSEPSLTKSGVYWSWNKNSASFENQLSQEASDAEKARKVWELSEKLVGLA.

The transit peptide at 1 to 64 directs the protein to the chloroplast; it reads MALQAASLVS…NQQIGAIRAQ (64 aa).

This sequence belongs to the short-chain dehydrogenases/reductases (SDR) family. POR subfamily.

It is found in the plastid. The protein resides in the chloroplast. It carries out the reaction chlorophyllide a + NADP(+) = protochlorophyllide a + NADPH + H(+). Its pathway is porphyrin-containing compound metabolism; chlorophyll biosynthesis. Phototransformation of protochlorophyllide (Pchlide) to chlorophyllide (Chlide). The chain is Protochlorophyllide reductase, chloroplastic (PORA) from Cucumis sativus (Cucumber).